The chain runs to 372 residues: Cytochrome b (372 aa).

The next 4 membrane-spanning stretches (helical) occupy residues 25-45 (FGSMLLTCLMMQIMTGFFLAI), 69-90 (WIMQNIHAIGASVFFICIYIHI), 105-125 (WFSGTALLITLMATAFFGYVL), and 170-190 (FFALHFILPFTIASLSSIHII). Heme b contacts are provided by His75 and His89. The heme b site is built by His174 and His188. His193 lines the a ubiquinone pocket. The next 4 helical transmembrane spans lie at 218–238 (YKDMLMTTSMFMLMFMILSFM), 280–300 (LGGTLALLMSVTILITAPFTH), 312–332 (LAQTLFWTLIATFITITWTAT), and 339–358 (FILISQMASVFYFSFFIMNP).

It belongs to the cytochrome b family. The cytochrome bc1 complex contains 3 respiratory subunits (MT-CYB, CYC1 and UQCRFS1), 2 core proteins (UQCRC1 and UQCRC2) and probably 6 low-molecular weight proteins. Heme b is required as a cofactor.

The protein resides in the mitochondrion inner membrane. In terms of biological role, component of the ubiquinol-cytochrome c reductase complex (complex III or cytochrome b-c1 complex) that is part of the mitochondrial respiratory chain. The b-c1 complex mediates electron transfer from ubiquinol to cytochrome c. Contributes to the generation of a proton gradient across the mitochondrial membrane that is then used for ATP synthesis. The sequence is that of Cytochrome b (MT-CYB) from Sinomicrurus japonicus (Coral snake).